The chain runs to 220 residues: Octanoyltransferase (220 aa).

The region spanning 27–208 (PGTADEIWLC…QLARAHGQAV (182 aa)) is the BPL/LPL catalytic domain. Residues 66–73 (RGGQVTYH), 139–141 (ALG), and 152–154 (GLA) each bind substrate. The active-site Acyl-thioester intermediate is Cys-170.

This sequence belongs to the LipB family.

Its subcellular location is the cytoplasm. It carries out the reaction octanoyl-[ACP] + L-lysyl-[protein] = N(6)-octanoyl-L-lysyl-[protein] + holo-[ACP] + H(+). The protein operates within protein modification; protein lipoylation via endogenous pathway; protein N(6)-(lipoyl)lysine from octanoyl-[acyl-carrier-protein]: step 1/2. Catalyzes the transfer of endogenously produced octanoic acid from octanoyl-acyl-carrier-protein onto the lipoyl domains of lipoate-dependent enzymes. Lipoyl-ACP can also act as a substrate although octanoyl-ACP is likely to be the physiological substrate. In Bordetella pertussis (strain Tohama I / ATCC BAA-589 / NCTC 13251), this protein is Octanoyltransferase.